Here is a 355-residue protein sequence, read N- to C-terminus: WAT1-related protein At3g28130 (355 aa).

The next 10 membrane-spanning stretches (helical) occupy residues 11–31 (AVLLTAMLATETGNVAMNTLF), 42–62 (YTFLIYSYLIGSIVLLPSHIF), 80–100 (IGVLGLLGSTYLITGFIGIEY), 104–124 (TLASAISNINPAITFILAIIF), 136–156 (SVAKMVGTIVSLVGALVVVLY), 186–206 (WIIGGCLLAIKDTLVPVAFIL), 218–238 (FTVSFFYFLIASILTSLIGIV), 244–264 (PSIWIIHFDITLVCIVVGGIF), 290–310 (LSILIAVIMGAIFLGDSFYLG), and 311–331 (SLVGGILISLGFYTVMWGKAK). The EamA domain maps to 29–154 (TLFKAATSKG…VSLVGALVVV (126 aa)).

This sequence belongs to the drug/metabolite transporter (DMT) superfamily. Plant drug/metabolite exporter (P-DME) (TC 2.A.7.4) family.

The protein localises to the membrane. The chain is WAT1-related protein At3g28130 from Arabidopsis thaliana (Mouse-ear cress).